Consider the following 97-residue polypeptide: Probable lipopolysaccharide assembly protein A (97 aa).

The next 2 membrane-spanning stretches (helical) occupy residues Met1–Ile21 and Val46–Ile66. A coiled-coil region spans residues Lys67 to Lys95.

Belongs to the LapA family.

It localises to the cell inner membrane. In terms of biological role, involved in the assembly of lipopolysaccharide (LPS). In Haemophilus influenzae (strain ATCC 51907 / DSM 11121 / KW20 / Rd), this protein is Probable lipopolysaccharide assembly protein A.